The primary structure comprises 556 residues: Double-strand-break repair protein rad21-like protein 1 (556 aa).

This sequence belongs to the rad21 family. In terms of assembly, component of some meiotic cohesin complex composed of the SMC1 (SMC1A or SMC1B) and SMC3 heterodimer attached via their hinge domain, RAD21L which link them, and STAG3.

It localises to the nucleus. It is found in the chromosome. In terms of biological role, meiosis-specific component of some cohesin complex required during the initial steps of prophase I in male meiosis. Probably required during early meiosis in males for separation of sister chromatids and homologous chromosomes. Replaces RAD21 in premeiotic S phase (during early stages of prophase I), while RAD21 reappears in later stages of prophase I. Involved in synaptonemal complex assembly, synapsis initiation and crossover recombination between homologous chromosomes during prophase I. This Homo sapiens (Human) protein is Double-strand-break repair protein rad21-like protein 1 (RAD21L1).